Consider the following 118-residue polypeptide: T cell receptor gamma variable 5 (118 aa).

Residues 1 to 17 (MRWALLVLLAFLSPASQ) form the signal peptide. Residues 18 to 118 (KSSNLEGGTK…GVYYCATWDR (101 aa)) enclose the Ig-like domain. Cysteine 41 and cysteine 113 are oxidised to a cystine. Asparagine 106 carries N-linked (GlcNAc...) asparagine glycosylation.

Gamma-delta TR is a heterodimer composed of a gamma and delta chain; disulfide-linked. The gamma-delta TR is associated with the transmembrane signaling CD3 coreceptor proteins following the stoichiometry: a single gamma-delta TR heterodimer associates with one CD3D-CD3E heterodimer, one CD3G-CD3E heterodimer and one CD247 homodimer forming a stable octameric structure. Upon activation, gamma-delta TR complex associates with FCER1G to initiate intracellular signaling.

The protein localises to the cell membrane. Functionally, v region of the variable domain of T cell receptor (TR) gamma chain that participates in the antigen recognition. Gamma-delta TRs recognize a variety of self and foreign non-peptide antigens frequently expressed at the epithelial boundaries between the host and external environment, including endogenous lipids presented by MH-like protein CD1D and phosphoantigens presented by butyrophilin-like molecule BTN3A1. Upon antigen recognition induces rapid, innate-like immune responses involved in pathogen clearance and tissue repair. Binding of gamma-delta TR complex to antigen triggers phosphorylation of immunoreceptor tyrosine-based activation motifs (ITAMs) in the CD3 chains by the LCK and FYN kinases, allowing the recruitment, phosphorylation, and activation of ZAP70 that facilitates phosphorylation of the scaffolding proteins LCP2 and LAT. This lead to the formation of a supramolecular signalosome that recruits the phospholipase PLCG1, resulting in calcium mobilization and ERK activation, ultimately leading to T cell expansion and differentiation into effector cells. Gamma-delta TRs are produced through somatic rearrangement of a limited repertoire of variable (V), diversity (D), and joining (J) genes. The potential diversity of gamma-delta TRs is conferred by the unique ability to rearrange (D) genes in tandem and to utilize all three reading frames. The combinatorial diversity is considerably increased by the sequence exonuclease trimming and random nucleotide (N) region additions which occur during the V-(D)-J rearrangements. In Homo sapiens (Human), this protein is T cell receptor gamma variable 5.